Consider the following 217-residue polypeptide: Cytidylate kinase (217 aa).

11 to 19 (GPAGAGKST) lines the ATP pocket.

Belongs to the cytidylate kinase family. Type 1 subfamily.

Its subcellular location is the cytoplasm. The enzyme catalyses CMP + ATP = CDP + ADP. The catalysed reaction is dCMP + ATP = dCDP + ADP. The protein is Cytidylate kinase of Clostridium perfringens (strain ATCC 13124 / DSM 756 / JCM 1290 / NCIMB 6125 / NCTC 8237 / Type A).